The primary structure comprises 268 residues: Tryptophan synthase alpha chain (268 aa).

Residues Glu-49 and Asp-60 each act as proton acceptor in the active site.

The protein belongs to the TrpA family. As to quaternary structure, tetramer of two alpha and two beta chains.

It catalyses the reaction (1S,2R)-1-C-(indol-3-yl)glycerol 3-phosphate + L-serine = D-glyceraldehyde 3-phosphate + L-tryptophan + H2O. It participates in amino-acid biosynthesis; L-tryptophan biosynthesis; L-tryptophan from chorismate: step 5/5. Functionally, the alpha subunit is responsible for the aldol cleavage of indoleglycerol phosphate to indole and glyceraldehyde 3-phosphate. The sequence is that of Tryptophan synthase alpha chain from Yersinia pestis bv. Antiqua (strain Antiqua).